The chain runs to 235 residues: Probable transcriptional regulatory protein CJJ81176_1187 (235 aa).

It belongs to the TACO1 family.

Its subcellular location is the cytoplasm. The polypeptide is Probable transcriptional regulatory protein CJJ81176_1187 (Campylobacter jejuni subsp. jejuni serotype O:23/36 (strain 81-176)).